The following is a 394-amino-acid chain: Serine palmitoyltransferase (394 aa).

Pyridoxal 5'-phosphate contacts are provided by residues Gly111–Phe112, Ser183, His211, and Thr239. N6-(pyridoxal phosphate)lysine is present on Lys242.

This sequence belongs to the class-II pyridoxal-phosphate-dependent aminotransferase family. Requires pyridoxal 5'-phosphate as cofactor.

The enzyme catalyses L-serine + hexadecanoyl-CoA + H(+) = 3-oxosphinganine + CO2 + CoA. It functions in the pathway lipid metabolism; sphingolipid metabolism. Its function is as follows. Involved in de novo bacterial ceramide synthesis. Catalyzes the condensation of L-serine with palmitoyl-CoA (hexadecanoyl-CoA) to produce 3-oxosphinganine. Also capable of using alanine as substrate leading to the formation of 1-deoxysphinganine (1-deoxySa). Contributes to the levels of endogenous sphingolipids in its host. This chain is Serine palmitoyltransferase, found in Bacteroides ovatus (strain ATCC 8483 / DSM 1896 / JCM 5824 / BCRC 10623 / CCUG 4943 / NCTC 11153).